A 408-amino-acid polypeptide reads, in one-letter code: Phosphoglycerate kinase (408 aa).

Substrate contacts are provided by residues 24 to 26, R39, 62 to 65, R121, and R161; these read DLN and HLGR. ATP is bound by residues K211, G307, E338, and 364–367; that span reads GGDS.

The protein belongs to the phosphoglycerate kinase family. In terms of assembly, monomer.

It localises to the cytoplasm. It carries out the reaction (2R)-3-phosphoglycerate + ATP = (2R)-3-phospho-glyceroyl phosphate + ADP. It participates in carbohydrate degradation; glycolysis; pyruvate from D-glyceraldehyde 3-phosphate: step 2/5. The polypeptide is Phosphoglycerate kinase (Pseudarthrobacter chlorophenolicus (strain ATCC 700700 / DSM 12829 / CIP 107037 / JCM 12360 / KCTC 9906 / NCIMB 13794 / A6) (Arthrobacter chlorophenolicus)).